The primary structure comprises 370 residues: Small ribosomal subunit biogenesis GTPase RsgA (370 aa).

Positions 97 to 255 (QTQLDRPPIA…LADTPGFNQP (159 aa)) constitute a CP-type G domain. GTP contacts are provided by residues 146-149 (NKSD) and 197-205 (GPSGVGKSS). Cys-280, Cys-285, His-287, and Cys-293 together coordinate Zn(2+). Residues 328–370 (TLKLKTKGKGQSQYEPKLESKKYRRTSRRTQVQGLQDLYQEEE) are disordered.

Belongs to the TRAFAC class YlqF/YawG GTPase family. RsgA subfamily. Monomer. Associates with 30S ribosomal subunit, binds 16S rRNA. Zn(2+) is required as a cofactor.

The protein resides in the cytoplasm. One of several proteins that assist in the late maturation steps of the functional core of the 30S ribosomal subunit. Helps release RbfA from mature subunits. May play a role in the assembly of ribosomal proteins into the subunit. Circularly permuted GTPase that catalyzes slow GTP hydrolysis, GTPase activity is stimulated by the 30S ribosomal subunit. The chain is Small ribosomal subunit biogenesis GTPase RsgA from Trichormus variabilis (strain ATCC 29413 / PCC 7937) (Anabaena variabilis).